The chain runs to 89 residues: Small ribosomal subunit protein uS15 (89 aa).

It belongs to the universal ribosomal protein uS15 family. In terms of assembly, part of the 30S ribosomal subunit. Forms a bridge to the 50S subunit in the 70S ribosome, contacting the 23S rRNA.

Functionally, one of the primary rRNA binding proteins, it binds directly to 16S rRNA where it helps nucleate assembly of the platform of the 30S subunit by binding and bridging several RNA helices of the 16S rRNA. Its function is as follows. Forms an intersubunit bridge (bridge B4) with the 23S rRNA of the 50S subunit in the ribosome. This is Small ribosomal subunit protein uS15 from Desulforapulum autotrophicum (strain ATCC 43914 / DSM 3382 / VKM B-1955 / HRM2) (Desulfobacterium autotrophicum).